The sequence spans 61 residues: UPF0434 protein Pput_3813 (61 aa).

Belongs to the UPF0434 family.

The protein is UPF0434 protein Pput_3813 of Pseudomonas putida (strain ATCC 700007 / DSM 6899 / JCM 31910 / BCRC 17059 / LMG 24140 / F1).